Here is a 94-residue protein sequence, read N- to C-terminus: uncharacterized protein (94 aa).

The protein belongs to the phage portal family. HK97 subfamily.

This is an uncharacterized protein from Rickettsia conorii (strain ATCC VR-613 / Malish 7).